A 235-amino-acid chain; its full sequence is Myc target protein 1 (235 aa).

Residues 95–113 (RRRRASAPISQWSSSRRSR) carry the Bipartite nuclear localization signal motif. 4 positions are modified to phosphoserine: Ser-135, Ser-138, Ser-141, and Ser-149.

Belongs to the MYCT1 family. In terms of tissue distribution, down-regulated in gastric cancer tissues.

It localises to the nucleus. May regulate certain MYC target genes, MYC seems to be a direct upstream transcriptional activator. Does not seem to significantly affect growth cell capacity. Overexpression seems to mediate many of the known phenotypic features associated with MYC, including promotion of apoptosis, alteration of morphology, enhancement of anchorage-independent growth, tumorigenic conversion, promotion of genomic instability, and inhibition of hematopoietic differentiation. The polypeptide is Myc target protein 1 (MYCT1) (Homo sapiens (Human)).